The sequence spans 729 residues: Neurochondrin (729 aa).

Ser-2 is modified (N-acetylserine). A Phosphoserine modification is found at Ser-2. Residues Cys-3 and Cys-4 are each lipidated (S-palmitoyl cysteine). Arg-75 carries the post-translational modification Asymmetric dimethylarginine. Ser-448 bears the Phosphoserine mark.

This sequence belongs to the neurochondrin family. As to quaternary structure, interacts with MCHR1. Interacts with SEMA4C. Interacts with DIAPH1 (via FH3 domain). Interacts with GRM5. Palmitoylated. Palmitoylation by ZDHHC1, ZDHHC3 and ZDHHC11 regulates the association of NCDN with endosome membranes. May also be palmitoylated by ZDHHC7.

The protein resides in the cytoplasm. It is found in the cytosol. Its subcellular location is the endosome membrane. The protein localises to the cell projection. It localises to the dendrite. The protein resides in the postsynapse. Probably involved in signal transduction, in the nervous system, via increasing cell surface localization of GRM5 and positively regulating its signaling. Required for the spatial learning process. Acts as a negative regulator of Ca(2+)-calmodulin-dependent protein kinase 2 (CaMK2) phosphorylation. May play a role in modulating melanin-concentrating hormone-mediated functions via its interaction with MCHR1 that interferes with G protein-coupled signal transduction. May be involved in bone metabolism. May also be involved in neurite outgrowth. This Bos taurus (Bovine) protein is Neurochondrin (NCDN).